Reading from the N-terminus, the 827-residue chain is MKRVCLPSSSEDSDDNGSLSTSWSQHSRSLPSFRHEDRKPSEVFRTDLITAMKLHDSNQLNPEDYYVLADPWRQEWEKGVQVPVNPEFIPETIARVIAEKDKVVTFTRPRKYIHSSGSEPPEVGYVDIQTLADAVCRYDLNEMDVAWLQLINEEFKEMGMQQLDEYTMEQVLEEFEKKCYDKMNHAIETEEGLGIEYDEDVVCDVCQSPDGEDGNEMVFCDKCNICVHQACYGILKVPEGSWLCRTCALGVQPKCLLCPKKGGAMKPTRSGTKWVHVSCALWIPEVSIGSPEKMEPITKVSHIPSNRWALLCSLCNEKVGACIQCSIKNCRTAFHVTCAFDHGLEMKTILTQEDEVKFKSYCPKHGSTKKPEDSHFCRSASDGKDTCEASPTFLGGLRVLEASQQNVKHGSQRKLKLQQLEDDFYSFVDVHDISQALKIPLDVTEYIYQYWKLRRKANFNEPLITPKKDEEDNLAKKEQDVLIRRLQLFTHLRQDLERVRNLTYMVTRREKMKRSVCRVQEQIFNLYTKISEQEKDLGFPLENGLLFNTQPSNPDAPKIEDLKWHSAFFRKRLGSSLRCSMKDSHKKSRERIIGKSLDTEILLTDRKKEGQTSDVSFPLEKTVAKIKPVQQKNGGSFPEHRKRRDSRTQGDTKFDSKEKPLRQQHRPAKHTEPPERPAEKKRALSQCGGKSATASSNKKQCSSSLPRYSGSLIKIHCNRPSVKVPTSPIKNWGGFRIPKKGEKVQPGSMETCQPNLNCQFLGQVSKKGRTKEKVKLDNDNDGYTPDAEMSDSESEPTDKCRLQRLTSSSSLSRGYETDFIRRSILAS.

The segment at M1–H35 is disordered. Polar residues predominate over residues N16–L30. Residues D200–G250 form a PHD-type 1 zinc finger. The segment at Q252 to V286 adopts a C2HC pre-PHD-type zinc-finger fold. The segment at L310–G366 adopts a PHD-type 2 zinc-finger fold. Disordered stretches follow at residues T622–L705 and R769–S810. 2 stretches are compositionally biased toward basic and acidic residues: residues S646–L661 and K669–R682. Positions A692–L705 are enriched in polar residues.

It belongs to the JADE family. As to quaternary structure, component of the HBO1 complex composed.

The protein localises to the nucleus. The protein resides in the chromosome. It localises to the cytoplasm. It is found in the cytoskeleton. Its subcellular location is the cilium basal body. In terms of biological role, scaffold subunit of some HBO1 complexes, which have a histone H4 acetyltransferase activity. Plays a key role in HBO1 complex by directing KAT7/HBO1 specificity towards histone H4 acetylation (H4K5ac, H4K8ac and H4K12ac), regulating DNA replication initiation, regulating DNA replication initiation. The chain is Protein Jade-1 (jade1) from Xenopus laevis (African clawed frog).